The following is an 85-amino-acid chain: Large ribosomal subunit protein bL31B (85 aa).

It belongs to the bacterial ribosomal protein bL31 family. Type B subfamily. In terms of assembly, part of the 50S ribosomal subunit.

In Staphylococcus haemolyticus (strain JCSC1435), this protein is Large ribosomal subunit protein bL31B.